The sequence spans 143 residues: MRTLGILEERNSRHCHSHFFLLSREVKCLKQFYTKLCYSTNNQPSISKSIPEHMHSLVYMVGHLLVWMLVGTIVLSLDIIFPALVTEPHLLHLLSFPSDISDTLSLSQVTSSYSNLLKDLEVLFFMGSLSVSIINPSSNGCNK.

A helical membrane pass occupies residues 65 to 85 (LVWMLVGTIVLSLDIIFPALV).

Its subcellular location is the membrane. This is an uncharacterized protein from Saccharomyces cerevisiae (strain ATCC 204508 / S288c) (Baker's yeast).